The sequence spans 312 residues: Methionyl-tRNA formyltransferase (312 aa).

107–110 serves as a coordination point for (6S)-5,6,7,8-tetrahydrofolate; sequence SLLP.

The protein belongs to the Fmt family.

It carries out the reaction L-methionyl-tRNA(fMet) + (6R)-10-formyltetrahydrofolate = N-formyl-L-methionyl-tRNA(fMet) + (6S)-5,6,7,8-tetrahydrofolate + H(+). Functionally, attaches a formyl group to the free amino group of methionyl-tRNA(fMet). The formyl group appears to play a dual role in the initiator identity of N-formylmethionyl-tRNA by promoting its recognition by IF2 and preventing the misappropriation of this tRNA by the elongation apparatus. The sequence is that of Methionyl-tRNA formyltransferase from Endomicrobium trichonymphae.